The sequence spans 451 residues: MAANVPPSAETLLSGAAAHPPKTAEEIANQYDLLPKLIPFLDRHLVFPLLEFSSGQDDDKEIVRAKYELLKHTNMTDYVANLWQEINNSDTIPDEFVKKREEVLAKLQHYQEESAKITELLQDEDVVGNLRSDKVANLKFLEEQHGVTPEMVNSLFDYGRFQYSCGSYGNAAELLYQFRVLSTDNDKVASATWGKLASEILTTSWEAAMEEVQKAKESIETRLFNNPLGQLQNRSWLIHWSLFPFFNYDPARDVLTDLFFSPAYINTIQTHCPWILRYLAAAVITNRGRAHKSSSLYQKQLKDLIRVVRQEGYEYSDPITDFVKALYIDFDFEEAQKKLGEAEDVLRSDFFLVSAADAFVEAARHLISESYCKIHQRIDIKDLSTRLGLNQDEGEKWIVNLIRDTRVDAKIDYKEGTVIMNHPPQSVYQQVIEKTKGAFFRTQVLSAAVAK.

A PCI domain is found at T256–Q425.

The protein belongs to the eIF-3 subunit E family. Component of the eukaryotic translation initiation factor 3 (eIF-3) complex.

The protein resides in the cytoplasm. Component of the eukaryotic translation initiation factor 3 (eIF-3) complex, which is involved in protein synthesis of a specialized repertoire of mRNAs and, together with other initiation factors, stimulates binding of mRNA and methionyl-tRNAi to the 40S ribosome. The eIF-3 complex specifically targets and initiates translation of a subset of mRNAs involved in cell proliferation. This chain is Eukaryotic translation initiation factor 3 subunit E (int6), found in Aspergillus oryzae (strain ATCC 42149 / RIB 40) (Yellow koji mold).